We begin with the raw amino-acid sequence, 512 residues long: GMP synthase [glutamine-hydrolyzing] (512 aa).

The region spanning 7–197 (TIIVLDFGSQ…VFGVCGCSEG (191 aa)) is the Glutamine amidotransferase type-1 domain. Cys-84 serves as the catalytic Nucleophile. Active-site residues include His-171 and Glu-173. The GMPS ATP-PPase domain occupies 198–387 (WNMENFIEVE…LGIPDEIVWR (190 aa)). 225–231 (SGGVDSS) is a binding site for ATP.

Homodimer.

The catalysed reaction is XMP + L-glutamine + ATP + H2O = GMP + L-glutamate + AMP + diphosphate + 2 H(+). It participates in purine metabolism; GMP biosynthesis; GMP from XMP (L-Gln route): step 1/1. Catalyzes the synthesis of GMP from XMP. The chain is GMP synthase [glutamine-hydrolyzing] from Bacillus cereus (strain ATCC 10987 / NRS 248).